Here is a 407-residue protein sequence, read N- to C-terminus: Phosphopentomutase (407 aa).

Mn(2+) is bound by residues Asp-10, Asp-306, His-311, Asp-347, His-348, and His-359.

Belongs to the phosphopentomutase family. Mn(2+) is required as a cofactor.

It localises to the cytoplasm. The catalysed reaction is 2-deoxy-alpha-D-ribose 1-phosphate = 2-deoxy-D-ribose 5-phosphate. It catalyses the reaction alpha-D-ribose 1-phosphate = D-ribose 5-phosphate. It participates in carbohydrate degradation; 2-deoxy-D-ribose 1-phosphate degradation; D-glyceraldehyde 3-phosphate and acetaldehyde from 2-deoxy-alpha-D-ribose 1-phosphate: step 1/2. Isomerase that catalyzes the conversion of deoxy-ribose 1-phosphate (dRib-1-P) and ribose 1-phosphate (Rib-1-P) to deoxy-ribose 5-phosphate (dRib-5-P) and ribose 5-phosphate (Rib-5-P), respectively. The polypeptide is Phosphopentomutase (Yersinia pestis bv. Antiqua (strain Angola)).